The primary structure comprises 485 residues: Cobyric acid synthase (485 aa).

The GATase cobBQ-type domain occupies R250–L436. C332 serves as the catalytic Nucleophile. The active site involves H428.

It belongs to the CobB/CobQ family. CobQ subfamily.

It functions in the pathway cofactor biosynthesis; adenosylcobalamin biosynthesis. Its function is as follows. Catalyzes amidations at positions B, D, E, and G on adenosylcobyrinic A,C-diamide. NH(2) groups are provided by glutamine, and one molecule of ATP is hydrogenolyzed for each amidation. The polypeptide is Cobyric acid synthase (Rhizorhabdus wittichii (strain DSM 6014 / CCUG 31198 / JCM 15750 / NBRC 105917 / EY 4224 / RW1) (Sphingomonas wittichii)).